The chain runs to 418 residues: Gamma-glutamyl phosphate reductase (418 aa).

The protein belongs to the gamma-glutamyl phosphate reductase family.

The protein resides in the cytoplasm. It carries out the reaction L-glutamate 5-semialdehyde + phosphate + NADP(+) = L-glutamyl 5-phosphate + NADPH + H(+). The protein operates within amino-acid biosynthesis; L-proline biosynthesis; L-glutamate 5-semialdehyde from L-glutamate: step 2/2. In terms of biological role, catalyzes the NADPH-dependent reduction of L-glutamate 5-phosphate into L-glutamate 5-semialdehyde and phosphate. The product spontaneously undergoes cyclization to form 1-pyrroline-5-carboxylate. The polypeptide is Gamma-glutamyl phosphate reductase (Moorella thermoacetica (strain ATCC 39073 / JCM 9320)).